Here is a 101-residue protein sequence, read N- to C-terminus: Small ribosomal subunit protein uS10 (101 aa).

The protein belongs to the universal ribosomal protein uS10 family. In terms of assembly, part of the 30S ribosomal subunit.

Functionally, involved in the binding of tRNA to the ribosomes. The polypeptide is Small ribosomal subunit protein uS10 (Anaeromyxobacter dehalogenans (strain 2CP-C)).